The sequence spans 1035 residues: Enteropeptidase (1035 aa).

A lipid anchor (N-myristoyl glycine) is attached at Gly2. The Cytoplasmic segment spans residues 2 to 18 (GSKRSVPSRHRSLTTYE). Residues 19 to 47 (VMFAVLFVILVALCAGLIAVSWLSIQGSV) traverse the membrane as a helical; Signal-anchor for type II membrane protein segment. Residues 48–1035 (KDAAFGKSHE…FTEWIQSFLH (988 aa)) are Extracellular-facing. The SEA domain occupies 54 to 169 (KSHEARGTLK…NSIDITASLE (116 aa)). N-linked (GlcNAc...) asparagine glycosylation is found at Asn116, Asn147, Asn170, and Asn194. The region spanning 197–238 (IECPPDSRLCADALKCIAIDLFCDGELNCPDGSDEDNKTCAT) is the LDL-receptor class A 1 domain. 4 disulfide bridges follow: Cys199–Cys212, Cys206–Cys225, Cys219–Cys236, and Cys240–Cys269. 9 N-linked (GlcNAc...) asparagine glycosylation sites follow: Asn233, Asn263, Asn264, Asn404, Asn456, Asn486, Asn519, Asn550, and Asn646. Residues 240–350 (CDGRFLLTGS…IGFKVTYTAF (111 aa)) form the CUB 1 domain. Positions 358-520 (YEKINCNFED…ISLTYGICNV (163 aa)) constitute an MAM domain. Residues Cys540 and Cys568 are joined by a disulfide bond. Residues 540–650 (CGGPHDLWEP…QGFKANFTTG (111 aa)) enclose the CUB 2 domain. Residues 657–695 (EPCKEDNFQCKDGECIPLVNLCDGFPHCKDGSDEAHCVR) enclose the LDL-receptor class A 2 domain. 3 cysteine pairs are disulfide-bonded: Cys659-Cys671, Cys666-Cys684, and Cys678-Cys693. The SRCR domain occupies 694 to 787 (VRLFNGTTDS…LILLQCNYKS (94 aa)). Residues Asn698, Asn722, Asn741, and Asn762 are each glycosylated (N-linked (GlcNAc...) asparagine). Cystine bridges form between Cys773–Cys783, Cys788–Cys912, Cys826–Cys842, Cys926–Cys993, Cys957–Cys972, and Cys983–Cys1011. Positions 801–1035 (IVGGSDSREG…FTEWIQSFLH (235 aa)) constitute a Peptidase S1 domain. Catalysis depends on His841, which acts as the Charge relay system. Asn864 carries an N-linked (GlcNAc...) asparagine glycan. Asp892 acts as the Charge relay system in catalysis. Asn903 and Asn965 each carry an N-linked (GlcNAc...) asparagine glycan. Ser987 functions as the Charge relay system in the catalytic mechanism.

The protein belongs to the peptidase S1 family. Heterodimer of a catalytic (light) chain and a multidomain (heavy) chain linked by a disulfide bond. The chains are derived from a single precursor that is cleaved by a trypsin-like protease. Intestinal brush border.

Its subcellular location is the membrane. It catalyses the reaction Activation of trypsinogen by selective cleavage of 6-Lys-|-Ile-7 bond.. In terms of biological role, responsible for initiating activation of pancreatic proteolytic proenzymes (trypsin, chymotrypsin and carboxypeptidase A). It catalyzes the conversion of trypsinogen to trypsin which in turn activates other proenzymes including chymotrypsinogen, procarboxypeptidases, and proelastases. In Bos taurus (Bovine), this protein is Enteropeptidase (TMPRSS15).